A 304-amino-acid chain; its full sequence is Cell surface-binding protein OPG105 (304 aa).

The protein belongs to the alpha-carbonic anhydrase family. In terms of assembly, homodimer; disulfide-linked. Post-translationally, apparently non-glycosylated.

It is found in the virion membrane. Its function is as follows. Binds to chondroitin sulfate on the cell surface to provide virion attachment to target cell. The protein is Cell surface-binding protein OPG105 (OPG105) of Monkeypox virus.